Consider the following 385-residue polypeptide: Probable caffeine synthase MTL2 (385 aa).

8 residues coordinate S-adenosyl-L-homocysteine: Y18, C62, N67, D101, L102, S140, F141, and C157. Residues Y158, H161, and W162 each contribute to the caffeine site. Mg(2+) is bound at residue N179. Residue T238 coordinates caffeine. Positions 261, 263, and 264 each coordinate Mg(2+). Y369 provides a ligand contact to caffeine.

Belongs to the methyltransferase superfamily. Type-7 methyltransferase family. Mg(2+) serves as cofactor.

It participates in alkaloid biosynthesis. May be involved in the biosynthesis of caffeine. In Coffea canephora (Robusta coffee), this protein is Probable caffeine synthase MTL2.